Consider the following 157-residue polypeptide: 6,7-dimethyl-8-ribityllumazine synthase (157 aa).

Residues phenylalanine 24, 58 to 60, and 82 to 84 each bind 5-amino-6-(D-ribitylamino)uracil; these read SFE and AVI. 87 to 88 lines the (2S)-2-hydroxy-3-oxobutyl phosphate pocket; sequence ET. Histidine 90 (proton donor) is an active-site residue. Residue phenylalanine 115 coordinates 5-amino-6-(D-ribitylamino)uracil. Arginine 129 is a binding site for (2S)-2-hydroxy-3-oxobutyl phosphate.

The protein belongs to the DMRL synthase family.

The enzyme catalyses (2S)-2-hydroxy-3-oxobutyl phosphate + 5-amino-6-(D-ribitylamino)uracil = 6,7-dimethyl-8-(1-D-ribityl)lumazine + phosphate + 2 H2O + H(+). The protein operates within cofactor biosynthesis; riboflavin biosynthesis; riboflavin from 2-hydroxy-3-oxobutyl phosphate and 5-amino-6-(D-ribitylamino)uracil: step 1/2. Its function is as follows. Catalyzes the formation of 6,7-dimethyl-8-ribityllumazine by condensation of 5-amino-6-(D-ribitylamino)uracil with 3,4-dihydroxy-2-butanone 4-phosphate. This is the penultimate step in the biosynthesis of riboflavin. The chain is 6,7-dimethyl-8-ribityllumazine synthase from Thermus thermophilus (strain ATCC BAA-163 / DSM 7039 / HB27).